We begin with the raw amino-acid sequence, 456 residues long: Alcohol acyltransferase 17 (456 aa).

Catalysis depends on proton acceptor residues His-166 and Asp-382.

The protein belongs to the plant acyltransferase family. As to expression, expressed in fruit.

Functionally, involved in the biosynthesis of volatile esters which confer kiwifruit flavor. Alcohol acyl transferase that can use a wide range of alcohols as substrate to produce esters. The polypeptide is Alcohol acyltransferase 17 (Actinidia deliciosa (Kiwi)).